The sequence spans 249 residues: Coproheme decarboxylase (249 aa).

Residue tyrosine 145 is part of the active site. Residues 145–149 (YPMAR) and histidine 172 each bind Fe-coproporphyrin III.

It belongs to the ChdC family. Type 1 subfamily. It depends on Fe-coproporphyrin III as a cofactor.

It carries out the reaction Fe-coproporphyrin III + 2 H2O2 + 2 H(+) = heme b + 2 CO2 + 4 H2O. The catalysed reaction is Fe-coproporphyrin III + H2O2 + H(+) = harderoheme III + CO2 + 2 H2O. It catalyses the reaction harderoheme III + H2O2 + H(+) = heme b + CO2 + 2 H2O. It functions in the pathway porphyrin-containing compound metabolism; protoheme biosynthesis. Its function is as follows. Involved in coproporphyrin-dependent heme b biosynthesis. Catalyzes the decarboxylation of Fe-coproporphyrin III (coproheme) to heme b (protoheme IX), the last step of the pathway. The reaction occurs in a stepwise manner with a three-propionate intermediate. This is Coproheme decarboxylase from Oceanobacillus iheyensis (strain DSM 14371 / CIP 107618 / JCM 11309 / KCTC 3954 / HTE831).